Reading from the N-terminus, the 323-residue chain is Beta-ketoacyl-[acyl-carrier-protein] synthase III (323 aa).

Catalysis depends on residues cysteine 113 and histidine 250. The interval 251–255 (QANKR) is ACP-binding. Residue asparagine 280 is part of the active site.

This sequence belongs to the thiolase-like superfamily. FabH family. In terms of assembly, homodimer.

It is found in the cytoplasm. It carries out the reaction malonyl-[ACP] + acetyl-CoA + H(+) = 3-oxobutanoyl-[ACP] + CO2 + CoA. The protein operates within lipid metabolism; fatty acid biosynthesis. Its function is as follows. Catalyzes the condensation reaction of fatty acid synthesis by the addition to an acyl acceptor of two carbons from malonyl-ACP. Catalyzes the first condensation reaction which initiates fatty acid synthesis and may therefore play a role in governing the total rate of fatty acid production. Possesses both acetoacetyl-ACP synthase and acetyl transacylase activities. Its substrate specificity determines the biosynthesis of branched-chain and/or straight-chain of fatty acids. This chain is Beta-ketoacyl-[acyl-carrier-protein] synthase III, found in Brucella canis (strain ATCC 23365 / NCTC 10854 / RM-666).